Here is an 832-residue protein sequence, read N- to C-terminus: MGRNRSGCVARCVSLTALVLLLCCPVVRSSEAETDPDSHTEHGDSHGGSREGNDTGFQIVTFRWEHVQTPYVIALWILVASLGKIVFHLSEKVTSVVPESALLIVLGLILGGIVWAADHSASFTLTPTVFFFYLLPPIVLDAGYFMPNRHFFGNLGTILTYAVIGTVWNAATTGLSLYGVFLLGLMGDLKAGLLEFLLFGSLIAAVDPVAVLAVFEEVHVNEVLFIIVFGESLLNDAVTVVLYNVFNSFVEVGAGNVQGLDYFKGIVSFFVVSLGGTAVGIIFAFILSLVTRFTKHVRVIEPGFVFVISYLSYLTADMLSLSAILAITFCGICCQKYVKANLCEQSITTVRYAMKMLASGAETIIFMFLGISAVNPTIWTWNTAFILLTLVFISVYRVIGVVIQTWILNHYRVVQLEIIDQVVMSYGGLRGAVAFALVVLLDSNYVGERRLFVSTTIIVVYFTVIFQGLTIKPLVKWLKVKRSQHKEPLLNEKLHGRAFDHILSAIEDISGQIGHNYLRDKWTNFDRKYLSKIMMRKSAQISRDKILSVFRELNLKDAISYVSEGERKGSLAFIRSSSDVNVDFTGPRHSVVDSSVSAVLRESTSEVCLDMHAVENRAKSPKDREEIVTHHMLQQHLYKPRKRYRLNYSRHKLARSEGEKQDKEIFQRTMKKRLENFKPTKLGTNYTTKFRNMKKERAAKKKHSDAVPNGRLATHSVSFHVNKDSEVEDPADGGISFLITPASNDADETGTGIDNPSFSNEEDQSIYQMIPPWISNEETVIPSQRARLQIPRSPTNFRRLTPLQLSNRSIDAFLLADISDEHPLSFLPESSM.

A signal peptide spans 1–29 (MGRNRSGCVARCVSLTALVLLLCCPVVRS). Over 30–66 (SEAETDPDSHTEHGDSHGGSREGNDTGFQIVTFRWEH) the chain is Extracellular. Positions 31-51 (EAETDPDSHTEHGDSHGGSRE) are disordered. The span at 36–51 (PDSHTEHGDSHGGSRE) shows a compositional bias: basic and acidic residues. Residues 67 to 89 (VQTPYVIALWILVASLGKIVFHL) form a helical membrane-spanning segment. Over 90 to 97 (SEKVTSVV) the chain is Cytoplasmic. A helical membrane pass occupies residues 98-117 (PESALLIVLGLILGGIVWAA). Topologically, residues 118–126 (DHSASFTLT) are extracellular. Residues 127-144 (PTVFFFYLLPPIVLDAGY) traverse the membrane as a helical segment. Topologically, residues 145–147 (FMP) are cytoplasmic. Residues 148–183 (NRHFFGNLGTILTYAVIGTVWNAATTGLSLYGVFLL) form a helical membrane-spanning segment. Glycine 153, glycine 156, and threonine 157 together coordinate a 1,2-diacyl-sn-glycero-3-phospho-(1D-myo-inositol). Topologically, residues 184–196 (GLMGDLKAGLLEF) are extracellular. The chain crosses the membrane as a helical span at residues 197–218 (LLFGSLIAAVDPVAVLAVFEEV). Over 219 to 220 (HV) the chain is Cytoplasmic. The helical transmembrane segment at 221 to 252 (NEVLFIIVFGESLLNDAVTVVLYNVFNSFVEV) threads the bilayer. Residues 253-259 (GAGNVQG) are Extracellular-facing. Residues 260–294 (LDYFKGIVSFFVVSLGGTAVGIIFAFILSLVTRFT) form a helical membrane-spanning segment. Residues 295-296 (KH) lie on the Cytoplasmic side of the membrane. The chain crosses the membrane as a helical span at residues 297 to 319 (VRVIEPGFVFVISYLSYLTADML). Residues 320 to 321 (SL) lie on the Extracellular side of the membrane. The helical transmembrane segment at 322 to 338 (SAILAITFCGICCQKYV) threads the bilayer. The Cytoplasmic segment spans residues 339–345 (KANLCEQ). A helical transmembrane segment spans residues 346-374 (SITTVRYAMKMLASGAETIIFMFLGISAV). Residues 375 to 382 (NPTIWTWN) lie on the Extracellular side of the membrane. A helical transmembrane segment spans residues 383 to 404 (TAFILLTLVFISVYRVIGVVIQ). Residues 405–417 (TWILNHYRVVQLE) are Cytoplasmic-facing. A helical membrane pass occupies residues 418-441 (IIDQVVMSYGGLRGAVAFALVVLL). Residues 442–448 (DSNYVGE) lie on the Extracellular side of the membrane. A helical membrane pass occupies residues 449-482 (RRLFVSTTIIVVYFTVIFQGLTIKPLVKWLKVKR). Residues 483 to 832 (SQHKEPLLNE…PLSFLPESSM (350 aa)) lie on the Cytoplasmic side of the membrane. Residues glutamine 512, isoleucine 513, and histidine 515 each coordinate a 1,2-diacyl-sn-glycero-3-phospho-(1D-myo-inositol). A disordered region spans residues 740–760 (TPASNDADETGTGIDNPSFSN).

Belongs to the monovalent cation:proton antiporter 1 (CPA1) transporter (TC 2.A.36) family. Homodimer. In terms of tissue distribution, detected in early distal renal tubules in the kidney bundle zone, in proximal and late distal tubules in the kidney sinus zone, in absorptive epithelial cells of the intestine and in rectal epithelium (at protein level). Isoform 1 is expressed strongly in the gills, at intermediate levels in the kidney, spleen, rectum, spiral intestine and skin, and weakly in the brain, blood and rectal gland. Isoform 2 is expressed strongly in the kidney, rectum and spiral intestine, and weakly in muscles and the rectal gland.

Its subcellular location is the apical cell membrane. It localises to the cell membrane. The protein localises to the recycling endosome membrane. It is found in the early endosome membrane. The enzyme catalyses Na(+)(in) + H(+)(out) = Na(+)(out) + H(+)(in). Its activity is regulated as follows. Seems to switch between active and inactive modes in response to various stimuli. Activated directly or indirectly by membrane phosphatidylinositol (PIs). Regulated by a variety of auxiliary proteins, which facilitate the maturation, cell surface expression and function of the transporter. Inhibited specifically by the drug tenapanor. In terms of biological role, plasma membrane Na(+)/H(+) antiporter. Exchanges intracellular H(+) ions for extracellular Na(+) in 1:1 stoichiometry, playing a key role in salt and fluid absorption and pH homeostasis. Major apical Na(+)/H(+) exchanger in kidney and intestine playing an important role in renal and intestine Na(+) absorption and blood pressure regulation. This Triakis scyllium (Banded houndshark) protein is Sodium/hydrogen exchanger 3.